The sequence spans 156 residues: Ribosomal RNA large subunit methyltransferase H (156 aa).

Residues L73, G104, and 123–128 (IGPLTL) contribute to the S-adenosyl-L-methionine site.

It belongs to the RNA methyltransferase RlmH family. Homodimer.

It is found in the cytoplasm. The enzyme catalyses pseudouridine(1915) in 23S rRNA + S-adenosyl-L-methionine = N(3)-methylpseudouridine(1915) in 23S rRNA + S-adenosyl-L-homocysteine + H(+). In terms of biological role, specifically methylates the pseudouridine at position 1915 (m3Psi1915) in 23S rRNA. This Xanthomonas axonopodis pv. citri (strain 306) protein is Ribosomal RNA large subunit methyltransferase H.